The following is a 48-amino-acid chain: Sperm protamine P1 (48 aa).

It belongs to the protamine P1 family. As to expression, testis.

It is found in the nucleus. The protein resides in the chromosome. In terms of biological role, protamines substitute for histones in the chromatin of sperm during the haploid phase of spermatogenesis. They compact sperm DNA into a highly condensed, stable and inactive complex. In Monophyllus redmani (Greater Antillean long-tongued bat), this protein is Sperm protamine P1 (PRM1).